A 225-amino-acid polypeptide reads, in one-letter code: Ribonuclease 3 (225 aa).

The region spanning 4-133 (FEKLETLLGY…LIAAIYLDSN (130 aa)) is the RNase III domain. Glutamate 46 serves as a coordination point for Mg(2+). Aspartate 50 is an active-site residue. The Mg(2+) site is built by asparagine 119 and glutamate 122. Glutamate 122 is an active-site residue. Positions 158–225 (DPKTALQEWA…AARSLLHRLK (68 aa)) constitute a DRBM domain.

The protein belongs to the ribonuclease III family. As to quaternary structure, homodimer. It depends on Mg(2+) as a cofactor.

Its subcellular location is the cytoplasm. The catalysed reaction is Endonucleolytic cleavage to 5'-phosphomonoester.. Digests double-stranded RNA. Involved in the processing of primary rRNA transcript to yield the immediate precursors to the large and small rRNAs (23S and 16S). Processes some mRNAs, and tRNAs when they are encoded in the rRNA operon. Processes pre-crRNA and tracrRNA of type II CRISPR loci if present in the organism. The polypeptide is Ribonuclease 3 (Rickettsia prowazekii (strain Madrid E)).